The primary structure comprises 178 residues: E1B protein, small T-antigen (178 aa).

Belongs to the adenoviridae E1B 19 kDa protein family.

The protein localises to the host cell membrane. It is found in the host nucleus envelope. The protein resides in the host nucleus lamina. Putative adenovirus Bcl-2 homolog that inhibits apoptosis induced by TNF or FAS pathways, as well as p53-mediated apoptosis. Without E1B 19K function, virus production is compromised because of premature death of host cell. Interacts with Bax protein in cell lysates. The sequence is that of E1B protein, small T-antigen from Human adenovirus B serotype 7 (HAdV-7).